We begin with the raw amino-acid sequence, 268 residues long: 4-hydroxy-tetrahydrodipicolinate reductase (268 aa).

NAD(+) is bound by residues 10 to 15, glutamate 36, 99 to 101, and 123 to 126; these read GSTGRM, GTT, and APNM. Histidine 156 acts as the Proton donor/acceptor in catalysis. Histidine 157 lines the (S)-2,3,4,5-tetrahydrodipicolinate pocket. The Proton donor role is filled by lysine 160. 166-167 is a binding site for (S)-2,3,4,5-tetrahydrodipicolinate; the sequence is GT.

Belongs to the DapB family.

The protein resides in the cytoplasm. The enzyme catalyses (S)-2,3,4,5-tetrahydrodipicolinate + NAD(+) + H2O = (2S,4S)-4-hydroxy-2,3,4,5-tetrahydrodipicolinate + NADH + H(+). It catalyses the reaction (S)-2,3,4,5-tetrahydrodipicolinate + NADP(+) + H2O = (2S,4S)-4-hydroxy-2,3,4,5-tetrahydrodipicolinate + NADPH + H(+). It participates in amino-acid biosynthesis; L-lysine biosynthesis via DAP pathway; (S)-tetrahydrodipicolinate from L-aspartate: step 4/4. Its function is as follows. Catalyzes the conversion of 4-hydroxy-tetrahydrodipicolinate (HTPA) to tetrahydrodipicolinate. This chain is 4-hydroxy-tetrahydrodipicolinate reductase, found in Nitrosomonas eutropha (strain DSM 101675 / C91 / Nm57).